The sequence spans 412 residues: DNA replication and repair protein RecF (412 aa).

Residue 30–37 participates in ATP binding; the sequence is GANGAGKT. Residues 369–412 are disordered; the sequence is LQVRPGGGTAAVTPDPEYARGEATAANGAASAPTGADAASTSRD. Low complexity predominate over residues 389-412; the sequence is GEATAANGAASAPTGADAASTSRD.

This sequence belongs to the RecF family.

The protein localises to the cytoplasm. Its function is as follows. The RecF protein is involved in DNA metabolism; it is required for DNA replication and normal SOS inducibility. RecF binds preferentially to single-stranded, linear DNA. It also seems to bind ATP. The polypeptide is DNA replication and repair protein RecF (Salinibacter ruber (strain DSM 13855 / M31)).